Reading from the N-terminus, the 855-residue chain is Protein translocase subunit SecA (855 aa).

ATP contacts are provided by residues Gln85, 103 to 107, and Asp492; that span reads GEGKT. Residues 794-845 are disordered; it reads AAIHEESSSAAAPGPGQNQPGGPGGPSAGPVAPVRNLDKHGRNELCPCGSGK. The span at 801–811 shows a compositional bias: low complexity; the sequence is SSAAAPGPGQN. Residues Cys839, Cys841, Cys850, and Cys851 each coordinate Zn(2+).

Belongs to the SecA family. In terms of assembly, monomer and homodimer. Part of the essential Sec protein translocation apparatus which comprises SecA, SecYEG and auxiliary proteins SecDF. Other proteins may also be involved. Requires Zn(2+) as cofactor.

It is found in the cell membrane. Its subcellular location is the cytoplasm. It carries out the reaction ATP + H2O + cellular proteinSide 1 = ADP + phosphate + cellular proteinSide 2.. Its function is as follows. Part of the Sec protein translocase complex. Interacts with the SecYEG preprotein conducting channel. Has a central role in coupling the hydrolysis of ATP to the transfer of proteins into and across the cell membrane, serving as an ATP-driven molecular motor driving the stepwise translocation of polypeptide chains across the membrane. In Clostridium beijerinckii (strain ATCC 51743 / NCIMB 8052) (Clostridium acetobutylicum), this protein is Protein translocase subunit SecA.